We begin with the raw amino-acid sequence, 217 residues long: Small ribosomal subunit protein uS3 (217 aa).

Residues 38-106 (IRKYIEQRLA…RVHINIIEIK (69 aa)) enclose the KH type-2 domain.

The protein belongs to the universal ribosomal protein uS3 family. Part of the 30S ribosomal subunit. Forms a tight complex with proteins S10 and S14.

In terms of biological role, binds the lower part of the 30S subunit head. Binds mRNA in the 70S ribosome, positioning it for translation. In Lactiplantibacillus plantarum (strain ATCC BAA-793 / NCIMB 8826 / WCFS1) (Lactobacillus plantarum), this protein is Small ribosomal subunit protein uS3.